Consider the following 3103-residue polypeptide: Extracellular matrix protein 3 (3103 aa).

Positions 1 to 19 are cleaved as a signal peptide; sequence MASALLCFLAAILPGMIAA. Residues 20-3047 lie on the Extracellular side of the membrane; the sequence is QNTWVLGTSD…TYELAPKGTN (3028 aa). CSPG repeat units lie at residues 289–388, 411–499, 520–630, 656–762, 784–875, 901–993, 1022–1124, 1145–1238, 1259–1357, 1378–1470, 1490–1579, and 1613–1710; these read PPSL…LEIV, APVV…FRMT, APIV…FRVV, PPEM…FVVQ, QPPT…LEIT, LPPG…LTLS, APNV…FRCT, EEPQ…VLLT, TPRL…FDIT, VHPS…FQVT, KEPV…FIVT, and APQI…VEVR. N-linked (GlcNAc...) asparagine glycosylation is found at Asn-330 and Asn-453. Residues Asn-989, Asn-1024, Asn-1042, Asn-1207, Asn-1294, Asn-1321, and Asn-1327 are each glycosylated (N-linked (GlcNAc...) asparagine). N-linked (GlcNAc...) asparagine glycans are attached at residues Asn-1542, Asn-1674, Asn-1679, Asn-1725, and Asn-1739. Calx-beta domains lie at 1717–1816, 1829–1942, 1956–2062, and 2077–2179; these read LPNQ…IILH, AVVT…VKLS, NVII…LVLN, and ITIN…LVLG. N-linked (GlcNAc...) asparagine glycosylation is found at Asn-2080, Asn-2195, Asn-2274, Asn-2385, and Asn-2932. Residues 2197 to 2302 enclose the Calx-beta 5 domain; that stretch reads TVVTVHDVGD…MREAFTLHIT (106 aa). Residues 2983–3013 are disordered; it reads SSGIGKRETEHHAISSRQRRQANSEALVDPA. A helical membrane pass occupies residues 3048 to 3068; it reads VVMIAVVIGVILIILLVALVI. Residues 3069–3103 lie on the Cytoplasmic side of the membrane; sequence GVVVRRRQAKQQPVVVVNGSAKVVSNVHFDDNTEV.

This sequence belongs to the FRAS1 family. As to expression, component of extracellular matrix fibers that interact with PMC filopodia during gastrulation (at protein level).

Its subcellular location is the cell membrane. In terms of biological role, extracellular matrix protein that may serve as substrate for the migratory primary mesenchyme cells (PMCs), the interaction possibly providing guidance information to migrating PMCs. The sequence is that of Extracellular matrix protein 3 (ECM3) from Lytechinus variegatus (Green sea urchin).